The primary structure comprises 220 residues: GTP cyclohydrolase 1 (220 aa).

Zn(2+) contacts are provided by cysteine 109, histidine 112, and cysteine 180.

It belongs to the GTP cyclohydrolase I family. As to quaternary structure, homomer.

It catalyses the reaction GTP + H2O = 7,8-dihydroneopterin 3'-triphosphate + formate + H(+). Its pathway is cofactor biosynthesis; 7,8-dihydroneopterin triphosphate biosynthesis; 7,8-dihydroneopterin triphosphate from GTP: step 1/1. The protein is GTP cyclohydrolase 1 of Pectobacterium carotovorum subsp. carotovorum (strain PC1).